The following is a 1417-amino-acid chain: DNA-directed RNA polymerase subunit beta' (1417 aa).

Zn(2+) contacts are provided by Cys71, Cys73, Cys86, and Cys89. Mg(2+) contacts are provided by Asp461, Asp463, and Asp465. Residues Cys815, Cys889, Cys896, and Cys899 each coordinate Zn(2+).

It belongs to the RNA polymerase beta' chain family. The RNAP catalytic core consists of 2 alpha, 1 beta, 1 beta' and 1 omega subunit. When a sigma factor is associated with the core the holoenzyme is formed, which can initiate transcription. Mg(2+) is required as a cofactor. Requires Zn(2+) as cofactor.

It carries out the reaction RNA(n) + a ribonucleoside 5'-triphosphate = RNA(n+1) + diphosphate. Functionally, DNA-dependent RNA polymerase catalyzes the transcription of DNA into RNA using the four ribonucleoside triphosphates as substrates. The chain is DNA-directed RNA polymerase subunit beta' from Pasteurella multocida (strain Pm70).